A 243-amino-acid polypeptide reads, in one-letter code: 3-deoxy-manno-octulosonate cytidylyltransferase (243 aa).

It belongs to the KdsB family.

Its subcellular location is the cytoplasm. The enzyme catalyses 3-deoxy-alpha-D-manno-oct-2-ulosonate + CTP = CMP-3-deoxy-beta-D-manno-octulosonate + diphosphate. The protein operates within nucleotide-sugar biosynthesis; CMP-3-deoxy-D-manno-octulosonate biosynthesis; CMP-3-deoxy-D-manno-octulosonate from 3-deoxy-D-manno-octulosonate and CTP: step 1/1. It participates in bacterial outer membrane biogenesis; lipopolysaccharide biosynthesis. Its function is as follows. Activates KDO (a required 8-carbon sugar) for incorporation into bacterial lipopolysaccharide in Gram-negative bacteria. The chain is 3-deoxy-manno-octulosonate cytidylyltransferase from Bartonella tribocorum (strain CIP 105476 / IBS 506).